Reading from the N-terminus, the 611-residue chain is MPFLDHRTGPSYGTIDQMEQHSDDEGERFLQEQCDTGRFSSDITSISEDSVQEGVRKIEAINLTWTARSLVIAYVSIFLMSFCTSLEGQTVMSLGAYATSAFSKHSLISTVLVVQNVVNAVIKPPMAKVADVFGRFEAFCVSILIYVLGYIQMAASTNVQTYASAQIFYSAGSTGLQILQQVFIADSSNLLNRAFLALLPEFPFLVTVWIGPTIADAVLKHASWRWGYGMWSIILPASFLPLALSLLLNQRKARRLNLIKPKSRPRGGVFAVLRRTWYDLDMGGLILLSAAVTLILVPLTLAANSKNGWKSDSIVAMIVVGLFCLIALPFWESSKRLAPKPLLSLHLLKQRTALAGCTLAFWYFMAFYFSVQPYFYSYLQVVQGYDVATAGRVTQTFAFTSTIAAFAVSILIKYTRRYRAFVIAGCVVYIIGMVLMMVTRHEGSTPAQILVTQVVVGIGGGLLNVPVQLGVQASASHQEVAAATAMFLTSMEMGGAVGAALSGAVWTHNIPRKLRLYLPEENKGDADAIFGKITKALSYPLGSPVRVAINQAYQETFKKLLILALIAIIPLVPLSLAMEDYKLDKMSEEPLVDPVPAEEGEIEPNRHVKRT.

Residues 1–25 (MPFLDHRTGPSYGTIDQMEQHSDDE) are disordered. Asn62 is a glycosylation site (N-linked (GlcNAc...) asparagine). The next 14 helical transmembrane spans lie at 71–91 (VIAYVSIFLMSFCTSLEGQTV), 107–127 (LISTVLVVQNVVNAVIKPPMA), 136–156 (FEAFCVSILIYVLGYIQMAAS), 165–185 (AQIFYSAGSTGLQILQQVFIA), 194–214 (AFLALLPEFPFLVTVWIGPTI), 228–248 (YGMWSIILPASFLPLALSLLL), 282–302 (MGGLILLSAAVTLILVPLTLA), 313–333 (SIVAMIVVGLFCLIALPFWES), 353–373 (ALAGCTLAFWYFMAFYFSVQP), 393–413 (VTQTFAFTSTIAAFAVSILIK), 418–438 (YRAFVIAGCVVYIIGMVLMMV), 449–469 (ILVTQVVVGIGGGLLNVPVQL), 486–506 (MFLTSMEMGGAVGAALSGAVW), and 560–580 (LLILALIAIIPLVPLSLAMED). Positions 592 to 611 (VDPVPAEEGEIEPNRHVKRT) are disordered.

Belongs to the major facilitator superfamily.

The protein localises to the membrane. Functionally, major facilitator transporter that contributes to the maintenance of intracellular siderophore ferricrocin (FC) levels. Plays a role in conidiation and confers protection against oxidative stress. Also contributes to fungal virulence in the Galleria mellonella animal model system. Does not appear to play a role in either siderophore export or uptake. This chain is MFS siderochrome iron transporter C, found in Aspergillus fumigatus (strain ATCC MYA-4609 / CBS 101355 / FGSC A1100 / Af293) (Neosartorya fumigata).